A 380-amino-acid polypeptide reads, in one-letter code: 4-hydroxy-3-methylbut-2-en-1-yl diphosphate synthase (flavodoxin) (380 aa).

Residues Cys280, Cys283, Cys315, and Glu322 each coordinate [4Fe-4S] cluster.

Belongs to the IspG family. It depends on [4Fe-4S] cluster as a cofactor.

It catalyses the reaction (2E)-4-hydroxy-3-methylbut-2-enyl diphosphate + oxidized [flavodoxin] + H2O + 2 H(+) = 2-C-methyl-D-erythritol 2,4-cyclic diphosphate + reduced [flavodoxin]. It participates in isoprenoid biosynthesis; isopentenyl diphosphate biosynthesis via DXP pathway; isopentenyl diphosphate from 1-deoxy-D-xylulose 5-phosphate: step 5/6. Its function is as follows. Converts 2C-methyl-D-erythritol 2,4-cyclodiphosphate (ME-2,4cPP) into 1-hydroxy-2-methyl-2-(E)-butenyl 4-diphosphate. In Cutibacterium acnes (strain DSM 16379 / KPA171202) (Propionibacterium acnes), this protein is 4-hydroxy-3-methylbut-2-en-1-yl diphosphate synthase (flavodoxin).